A 262-amino-acid polypeptide reads, in one-letter code: Putative hydro-lyase cu1581 (262 aa).

Belongs to the D-glutamate cyclase family.

The sequence is that of Putative hydro-lyase cu1581 from Corynebacterium urealyticum (strain ATCC 43042 / DSM 7109).